Consider the following 399-residue polypeptide: PCI domain-containing protein 2 (399 aa).

Alanine 2 is modified (N-acetylalanine). Serine 45 carries the phosphoserine modification. The region spanning 210–391 is the PCI domain; sequence ITYKYYVGRK…QKLVVSKQNP (182 aa).

This sequence belongs to the CSN12 family. Component of the nuclear pore complex (NPC)-associated TREX-2 complex (transcription and export complex 2), composed of at least GANP, 2 copies of ENY2, PCID2, SEM1/DSS1, and either centrin CETN2 or centrin CETN3. The TREX-2 complex also associates with ALYREF/ALY and with the nucleoporin NUP153. Interacts with BRCA2. Interacts with SRCAP chromatin remodeling complex component ZNHIT1; the interaction results in inhibition of SRCAP complex activity, preventing the deposition of histone variant H2AZ1/H2A.Z to lymphoid fate regulator genes and restricting lymphoid lineage commitment. As to expression, highly expressed in bone marrow and haematopoietic progenitor cells but is almost undetectable in mature blood cells.

Its subcellular location is the cytoplasm. It localises to the nucleus. It is found in the nuclear pore complex. Required for B-cell survival through the regulation of the expression of cell-cycle checkpoint MAD2L1 protein during B cell differentiation. As a component of the TREX-2 complex, involved in the export of mRNAs to the cytoplasm through the nuclear pores. Binds and stabilizes BRCA2 and is thus involved in the control of R-loop-associated DNA damage and transcription-associated genomic instability. Blocks the activity of the SRCAP chromatin remodeling complex by interacting with SRCAP complex member ZNHIT1 and inhibiting its interaction with the complex. This prevents the deposition of histone variant H2AZ1/H2A.Z at the nucleosomes of key lymphoid fate regulator genes which suppresses their expression and restricts lymphoid lineage commitment. This is PCI domain-containing protein 2 (Pcid2) from Mus musculus (Mouse).